Here is a 304-residue protein sequence, read N- to C-terminus: Probable HTH-type transcriptional regulator LgoR (304 aa).

One can recognise an HTH gntR-type domain in the interval 1–70; sequence MSRSQNLRHN…VGNDYVIARK (70 aa). The H-T-H motif DNA-binding region spans 31–50; that stretch reads QSALAEMYNISRTTVRHILS.

Its function is as follows. May be a positive transcriptional regulator for lgoD and/or lgoT. Is essential for growth on L-galactonate as the sole carbon source. This is Probable HTH-type transcriptional regulator LgoR (lgoR) from Escherichia coli (strain K12).